The primary structure comprises 82 residues: ATP synthase subunit c, chloroplastic (82 aa).

The next 2 membrane-spanning stretches (helical) occupy residues 7–27 (AASVVASGLSVGLAAIGPGIG) and 57–77 (LAFMESLTIYGLVVALALLFA).

Belongs to the ATPase C chain family. In terms of assembly, F-type ATPases have 2 components, F(1) - the catalytic core - and F(0) - the membrane proton channel. F(1) has five subunits: alpha(3), beta(3), gamma(1), delta(1), epsilon(1). F(0) has four main subunits: a(1), b(1), b'(1) and c(10-14). The alpha and beta chains form an alternating ring which encloses part of the gamma chain. F(1) is attached to F(0) by a central stalk formed by the gamma and epsilon chains, while a peripheral stalk is formed by the delta, b and b' chains.

It localises to the plastid. The protein localises to the chloroplast thylakoid membrane. Its function is as follows. F(1)F(0) ATP synthase produces ATP from ADP in the presence of a proton or sodium gradient. F-type ATPases consist of two structural domains, F(1) containing the extramembraneous catalytic core and F(0) containing the membrane proton channel, linked together by a central stalk and a peripheral stalk. During catalysis, ATP synthesis in the catalytic domain of F(1) is coupled via a rotary mechanism of the central stalk subunits to proton translocation. Functionally, key component of the F(0) channel; it plays a direct role in translocation across the membrane. A homomeric c-ring of between 10-14 subunits forms the central stalk rotor element with the F(1) delta and epsilon subunits. The polypeptide is ATP synthase subunit c, chloroplastic (Guillardia theta (Cryptophyte)).